Here is a 530-residue protein sequence, read N- to C-terminus: S-adenosylhomocysteine hydrolase-like protein 1 (530 aa).

At Met1 the chain carries N-acetylmethionine. N-acetylserine is present on Ser2. The residue at position 2 (Ser2) is a Phosphoserine. Lys40 is modified (N6-acetyllysine). Residues 53 to 103 (KFPTKTGRRSLSRSISQSSTDSYSSAASYTDSSDDEVSPREKQQTNSKGSS) are disordered. Low complexity predominate over residues 64–83 (SRSISQSSTDSYSSAASYTD). The PEST stretch occupies residues 65 to 92 (RSISQSSTDSYSSAASYTDSSDDEVSPR). Phosphoserine occurs at positions 68, 71, 74, 77, and 84. Positions 138–201 (QGEKPLAGAK…EAGVAVFAWK (64 aa)) are interaction with BCL2L10. Thr155, Asp229, Glu254, Lys284, and Asp288 together coordinate substrate. The NAD binding stretch occupies residues 281-448 (SVTKQKFDNL…EGRLLNLSCS (168 aa)). NAD(+) contacts are provided by residues 318–322 (GYGEV), Glu341, and Asn376. Ser391 carries the post-translational modification Phosphoserine. Residue 397–399 (MGH) participates in NAD(+) binding. The interval 520 to 530 (NGPFKPNYYRY) is PDZ-binding.

This sequence belongs to the adenosylhomocysteinase family. As to quaternary structure, forms multimers. Forms heteromultimers with AHCYL2 (via the C-terminal region). Interacts (when phosphorylated) with ITPR1 (when not phosphorylated); the interaction suppresses inositol 1,4,5-trisphosphate binding to ITPR1. Interacts with BCL2L10; this strengthens the interaction of AHCYL1 with ITPR1. Interacts with CFTR and SLC26A6; the interactions take place once AHCYL1 is released from ITPR1 and increase CFTR and SLC26A6 activities. Interacts with RRM1; in a phosphorylation- and (dATP)-dependent manner. Interacts (via PEST domain when phosphorylated) with SLC4A4 isoform 1 but not isoform 2; the interaction increases SLC4A4 isoform 1 activity. Interacts (when phosphorylated) with SLC9A3; the interaction is required for SLC9A3 apical location and activity. Interacts (when phosphorylated) with FIP1L1; the interaction is direct and associates AHCYL1 with the CPSF complex and RNA. Interacts with PAPOLA. Interacts with ZCCHC4. Interacts with AHCY. It depends on NAD(+) as a cofactor. Post-translationally, phosphorylated at Ser/Thr residues between Ser-68 and Thr-72 in the PEST region: required for interaction with dATP-bound RRM1 and ITPR1. Phosphorylation at Ser-68 by PRKD1 and CAMK4 is required for further phosphorylations by CSNK1A1. Phosphorylation is induced by oxidative stress. Probably phosphorylated by CAMK2A; phosphorylation at Ser-68 may be required for interaction with SLC9A3. Dephosphorylated in response to apoptotic stress conditions which causes translocation of both AHCYL1 and BCL2L10 from mitochondria-associated endoplasmic reticulum membranes and promotes apoptosis. Expressed in dendritic cells.

Its subcellular location is the endoplasmic reticulum. The protein resides in the cytoplasm. It localises to the cytosol. The protein localises to the apical cell membrane. It is found in the microsome. Functionally, multifaceted cellular regulator which coordinates several essential cellular functions including regulation of epithelial HCO3(-) and fluid secretion, mRNA processing and DNA replication. Regulates ITPR1 sensitivity to inositol 1,4,5-trisphosphate, competing for the common binding site and acting as endogenous 'pseudoligand' whose inhibitory activity can be modulated by its phosphorylation status. Promotes the formation of contact points between the endoplasmic reticulum (ER) and mitochondria, facilitating transfer of Ca(2+) from the ER to mitochondria. Under normal cellular conditions, functions cooperatively with BCL2L10 to limit ITPR1-mediated Ca(2+) release but, under apoptotic stress conditions, dephosphorylated which promotes dissociation of both AHCYL1 and BCL2L10 from mitochondria-associated endoplasmic reticulum membranes, inhibits BCL2L10 interaction with ITPR1 and leads to increased Ca(2+) transfer to mitochondria which promotes apoptosis. In the pancreatic and salivary ducts, at resting state, attenuates inositol 1,4,5-trisphosphate-induced calcium release by interacting with ITPR1. When extracellular stimuli induce ITPR1 phosphorylation or inositol 1,4,5-trisphosphate production, dissociates from ITPR1 to interact with CFTR and SLC26A6, mediating their synergistic activation by calcium and cAMP that stimulates the epithelial secretion of electrolytes and fluid. Also activates basolateral SLC4A4 isoform 1 to coordinate fluid and HCO3(-) secretion. Inhibits the effect of STK39 on SLC4A4 and CFTR by recruiting PP1 phosphatase which activates SLC4A4, SLC26A6 and CFTR through dephosphorylation. Mediates the induction of SLC9A3 surface expression produced by Angiotensin-2. Depending on the cell type, activates SLC9A3 in response to calcium or reverses SLC9A3R2-dependent calcium inhibition. May modulate the polyadenylation state of specific mRNAs, both by controlling the subcellular location of FIP1L1 and by inhibiting PAPOLA activity, in response to a stimulus that alters its phosphorylation state. Acts as a (dATP)-dependent inhibitor of ribonucleotide reductase large subunit RRM1, controlling the endogenous dNTP pool and ensuring normal cell cycle progression. In vitro does not exhibit any S-adenosyl-L-homocysteine hydrolase activity. The protein is S-adenosylhomocysteine hydrolase-like protein 1 of Homo sapiens (Human).